The primary structure comprises 318 residues: tRNA-dihydrouridine(16) synthase (318 aa).

FMN-binding positions include 7–9 and glutamine 68; that span reads PME. Cysteine 98 acts as the Proton donor in catalysis. Residues lysine 139, 200–202, and 224–225 each bind FMN; these read NGE and CR.

It belongs to the Dus family. DusC subfamily. It depends on FMN as a cofactor.

The catalysed reaction is 5,6-dihydrouridine(16) in tRNA + NADP(+) = uridine(16) in tRNA + NADPH + H(+). It catalyses the reaction 5,6-dihydrouridine(16) in tRNA + NAD(+) = uridine(16) in tRNA + NADH + H(+). Functionally, catalyzes the synthesis of 5,6-dihydrouridine (D), a modified base found in the D-loop of most tRNAs, via the reduction of the C5-C6 double bond in target uridines. Specifically modifies U16 in tRNAs. The chain is tRNA-dihydrouridine(16) synthase from Vibrio vulnificus (strain CMCP6).